The chain runs to 110 residues: MHEMSITQSVVEICTQNAGGRRVTAVILEIGDLSGVVPDAIEFCFEACTRDTQLDGARLLIERVQALGRCRDCKAEFALSAYYDPCPACGGFGVDVLSGEELRVKELEVE.

Position 2 (histidine 2) interacts with Ni(2+). 4 residues coordinate Zn(2+): cysteine 70, cysteine 73, cysteine 86, and cysteine 89.

The protein belongs to the HypA/HybF family.

Its function is as follows. Involved in the maturation of [NiFe] hydrogenases. Required for nickel insertion into the metal center of the hydrogenase. The protein is Hydrogenase maturation factor HypA of Geotalea uraniireducens (strain Rf4) (Geobacter uraniireducens).